The sequence spans 3843 residues: NBPF family member NBPF19 (3843 aa).

A coiled-coil region spans residues 70 to 130; sequence MLRNERQFKE…RSLNEHLQAL (61 aa). Olduvai domains follow at residues 165–257, 258–329, 330–421, 424–479, 480–572, 573–665, 668–723, 724–816, 817–909, 912–967, 968–1060, 1061–1153, 1156–1211, 1212–1304, 1305–1397, 1400–1455, 1456–1548, 1549–1641, 1644–1699, 1700–1792, 1793–1885, 1888–1943, 1944–2036, 2037–2129, 2132–2187, 2188–2280, 2281–2373, 2376–2431, 2432–2524, 2525–2617, 2620–2675, 2676–2768, 2769–2861, 2864–2919, 2920–3012, 3013–3105, 3108–3163, 3164–3256, 3257–3349, 3352–3407, 3408–3500, 3501–3593, 3596–3651, 3652–3744, and 3745–3843; these read ENDN…HIIP, ENES…VDIG, RHRW…PSCP, SREL…LDVD, RIKK…RSKK, ERRR…PSCP, and ERRR…IFPQ. Disordered regions lie at residues 180 to 203 and 249 to 295; these read EKVQKSSAPREMQKAEEKEVPEDS and WEDA…EGYS. Composition is skewed to acidic residues over residues 259-268 and 279-291; these read NESDDEEEEE and ESEEEEVPQESWD. The tract at residues 559-597 is disordered; the sequence is KGKGKKRRGRRSKKERRRGRKEGEEDQNPPCPRLSRELL. The span at 560–578 shows a compositional bias: basic residues; the sequence is GKGKKRRGRRSKKERRRGR. The interval 803 to 841 is disordered; it reads KGKGKKRRGRRSKKERRRGRKEGEEDQNPPCPRLSRELL. A compositionally biased stretch (basic residues) spans 804 to 822; that stretch reads GKGKKRRGRRSKKERRRGR. The segment at 1047–1085 is disordered; the sequence is KGKGKKRRGRRSKKERRRGRKEGEEDQNPPCPRLSRELL. Residues 1048–1066 show a composition bias toward basic residues; that stretch reads GKGKKRRGRRSKKERRRGR. The tract at residues 1291–1329 is disordered; that stretch reads KGKGKKRRGRRSKKERRRGRKEGEEDQNPPCPRLSRELL. The span at 1292-1310 shows a compositional bias: basic residues; that stretch reads GKGKKRRGRRSKKERRRGR. Residues 1535 to 1573 form a disordered region; that stretch reads KGKGKKRRGRRSKKERRRGRKEGEEDQNPPCPRLSRELL. Over residues 1536 to 1554 the composition is skewed to basic residues; it reads GKGKKRRGRRSKKERRRGR. The tract at residues 1779-1817 is disordered; it reads KGKGKKRRGRRSKKERRRGRKEGEEDQNPPCPRLSRELL. Basic residues predominate over residues 1780-1798; it reads GKGKKRRGRRSKKERRRGR. Positions 2023–2061 are disordered; it reads KGKGKKRRGRRSKKERRRGRKEGEEDQNPPCPRLSRELL. Residues 2024 to 2042 show a composition bias toward basic residues; it reads GKGKKRRGRRSKKERRRGR. Residues 2267–2305 are disordered; it reads KGKGKKRRGRRSKKERRRGRKEGEEDQNPPCPRLSRELL. The span at 2268-2286 shows a compositional bias: basic residues; that stretch reads GKGKKRRGRRSKKERRRGR. The segment at 2511 to 2549 is disordered; that stretch reads KGKGKKRRGRRSKKERRRGRKEGEEDQNPPCPRLSRELL. Residues 2512 to 2530 are compositionally biased toward basic residues; that stretch reads GKGKKRRGRRSKKERRRGR. The segment at 2755 to 2793 is disordered; sequence KGKGKKRRGRRSKKERRRGRKEGEEDQNPPCPRLSRELL. Over residues 2756–2774 the composition is skewed to basic residues; that stretch reads GKGKKRRGRRSKKERRRGR. The interval 2999–3037 is disordered; that stretch reads KGKGKKRRGRRSKKERRRGRKEGEEDQNPPCPRLSRELL. A compositionally biased stretch (basic residues) spans 3000 to 3018; that stretch reads GKGKKRRGRRSKKERRRGR. Residues 3243–3281 are disordered; sequence KGKGKKRRGRRSKKERRRGRKEGEEDQNPPCPRLSRELL. The span at 3244 to 3262 shows a compositional bias: basic residues; the sequence is GKGKKRRGRRSKKERRRGR. A disordered region spans residues 3487–3525; the sequence is KGKGKKRRGRRSKKERRRGRKEGEEDQNPPCPRLSRELL. Positions 3488–3506 are enriched in basic residues; that stretch reads GKGKKRRGRRSKKERRRGR. The interval 3731 to 3764 is disordered; it reads KGKGKKRRGRRSKKERRRGRKEGEEDQNPPCPRL. Over residues 3732 to 3750 the composition is skewed to basic residues; it reads GKGKKRRGRRSKKERRRGR.

This sequence belongs to the NBPF family.

Its subcellular location is the cytoplasm. The chain is NBPF family member NBPF19 from Homo sapiens (Human).